Here is a 361-residue protein sequence, read N- to C-terminus: Probable purine permease 5 (361 aa).

The next 9 membrane-spanning stretches (helical) occupy residues 37–57 (WILL…SSLL), 70–90 (WIIS…LLPT), 105–125 (LVLS…MYAY), 134–154 (TSSL…YLIV), 158–178 (LNAS…IIAL), 193–213 (YFAG…IFAL), 235–255 (VMVS…SNDF), 285–305 (LGVL…AGVL), and 315–335 (VAAV…SLVL). The region spanning 75–178 (VAVAGWPITC…ITGAMAIIAL (104 aa)) is the EamA domain.

This sequence belongs to the purine permeases (TC 2.A.7.14) family.

Its subcellular location is the membrane. This is Probable purine permease 5 (PUP5) from Arabidopsis thaliana (Mouse-ear cress).